A 730-amino-acid polypeptide reads, in one-letter code: uncharacterized protein (730 aa).

A phosphoserine mark is found at S82 and S89. Disordered stretches follow at residues S82–Y114 and N447–E468. Residues S89 to N98 are compositionally biased toward polar residues. Positions N449 to N460 are enriched in low complexity. Residues S483 and S651 each carry the phosphoserine modification.

This is an uncharacterized protein from Saccharomyces cerevisiae (strain ATCC 204508 / S288c) (Baker's yeast).